A 115-amino-acid polypeptide reads, in one-letter code: DNA repair protein homolog YozK (115 aa).

The UmuC domain occupies 12 to 115 (ILCVDMKSFY…EKCVHTYSID (104 aa)). Positions 16 and 115 each coordinate Mg(2+).

The protein belongs to the DNA polymerase type-Y family. Mg(2+) is required as a cofactor.

In Bacillus subtilis (strain 168), this protein is DNA repair protein homolog YozK (yozK).